Reading from the N-terminus, the 340-residue chain is Adenine deaminase (340 aa).

H17, H19, and H197 together coordinate Zn(2+). E200 serves as the catalytic Proton donor. D278 contributes to the Zn(2+) binding site. D279 is a binding site for substrate.

The protein belongs to the metallo-dependent hydrolases superfamily. Adenosine and AMP deaminases family. Adenine deaminase type 2 subfamily. Zn(2+) serves as cofactor.

It carries out the reaction adenine + H2O + H(+) = hypoxanthine + NH4(+). Functionally, catalyzes the hydrolytic deamination of adenine to hypoxanthine. Plays an important role in the purine salvage pathway and in nitrogen catabolism. In Streptomyces coelicolor (strain ATCC BAA-471 / A3(2) / M145), this protein is Adenine deaminase.